The chain runs to 456 residues: Bifunctional protein GlmU (456 aa).

A pyrophosphorylase region spans residues 1–229 (MSNSSMSVVI…LSEVEGVNNR (229 aa)). Residues 11–14 (LAAG), Lys25, Gln76, 81–82 (GT), 103–105 (YGD), Gly140, Glu154, Asn169, and Asn227 each bind UDP-N-acetyl-alpha-D-glucosamine. Asp105 contributes to the Mg(2+) binding site. A Mg(2+)-binding site is contributed by Asn227. A linker region spans residues 230 to 250 (LQLAALERVYQSEQAEKLLLA). Residues 251-456 (GVMLLDPARF…QGWQRPIKKK (206 aa)) form an N-acetyltransferase region. UDP-N-acetyl-alpha-D-glucosamine-binding residues include Arg333 and Lys351. Residue His363 is the Proton acceptor of the active site. The UDP-N-acetyl-alpha-D-glucosamine site is built by Tyr366 and Asn377. Acetyl-CoA is bound by residues Ala380, 386–387 (NY), Ser405, Ala423, and Arg440.

It in the N-terminal section; belongs to the N-acetylglucosamine-1-phosphate uridyltransferase family. In the C-terminal section; belongs to the transferase hexapeptide repeat family. In terms of assembly, homotrimer. The cofactor is Mg(2+).

It is found in the cytoplasm. The catalysed reaction is alpha-D-glucosamine 1-phosphate + acetyl-CoA = N-acetyl-alpha-D-glucosamine 1-phosphate + CoA + H(+). The enzyme catalyses N-acetyl-alpha-D-glucosamine 1-phosphate + UTP + H(+) = UDP-N-acetyl-alpha-D-glucosamine + diphosphate. It participates in nucleotide-sugar biosynthesis; UDP-N-acetyl-alpha-D-glucosamine biosynthesis; N-acetyl-alpha-D-glucosamine 1-phosphate from alpha-D-glucosamine 6-phosphate (route II): step 2/2. Its pathway is nucleotide-sugar biosynthesis; UDP-N-acetyl-alpha-D-glucosamine biosynthesis; UDP-N-acetyl-alpha-D-glucosamine from N-acetyl-alpha-D-glucosamine 1-phosphate: step 1/1. It functions in the pathway bacterial outer membrane biogenesis; LPS lipid A biosynthesis. In terms of biological role, catalyzes the last two sequential reactions in the de novo biosynthetic pathway for UDP-N-acetylglucosamine (UDP-GlcNAc). The C-terminal domain catalyzes the transfer of acetyl group from acetyl coenzyme A to glucosamine-1-phosphate (GlcN-1-P) to produce N-acetylglucosamine-1-phosphate (GlcNAc-1-P), which is converted into UDP-GlcNAc by the transfer of uridine 5-monophosphate (from uridine 5-triphosphate), a reaction catalyzed by the N-terminal domain. The chain is Bifunctional protein GlmU from Yersinia enterocolitica serotype O:8 / biotype 1B (strain NCTC 13174 / 8081).